We begin with the raw amino-acid sequence, 668 residues long: Pentatricopeptide repeat-containing protein CRP1, chloroplastic (668 aa).

The N-terminal 64 residues, 1 to 64 (MPASLLPPTF…SASLTSPSPP (64 aa)), are a transit peptide targeting the chloroplast. 14 PPR repeats span residues 154–188 (SPLL…DFLP), 189–226 (DLAS…RLEP), 227–261 (DAPL…GLTP), 262–297 (RSNA…EIKP), 298–332 (RTRA…GVAP), 333–367 (DEAT…GVKP), 368–402 (SSYV…GVRP), 403–437 (DRHF…GIEP), 438–472 (DVVT…NCPP), 473–507 (GTTT…GLVP), 508–542 (NIIT…GLKP), 543–577 (SPTM…GLEV), 578–612 (SILV…GLRP), and 613–647 (DVIT…GCAP).

This sequence belongs to the PPR family. P subfamily. In terms of assembly, component of a multisubunit complex.

Its subcellular location is the plastid. The protein localises to the chloroplast stroma. Required for the translation of the chloroplast petA and petD mRNAs. Required for the processing of the petD mRNA from a polycistronic precursor. Binds with high affinity to the 5'-UTR of the chloroplastic petA transcript. Activates psaC and petA translation by binding their 5'-UTRs. The polypeptide is Pentatricopeptide repeat-containing protein CRP1, chloroplastic (Zea mays (Maize)).